Here is a 103-residue protein sequence, read N- to C-terminus: Pterin-4-alpha-carbinolamine dehydratase 2 (103 aa).

It belongs to the pterin-4-alpha-carbinolamine dehydratase family. Highest level found in the kidney, liver, heart and ovarian follicles.

It carries out the reaction (4aS,6R)-4a-hydroxy-L-erythro-5,6,7,8-tetrahydrobiopterin = (6R)-L-erythro-6,7-dihydrobiopterin + H2O. In terms of biological role, involved in tetrahydrobiopterin biosynthesis. Seems to both prevent the formation of 7-pterins and accelerate the formation of quinonoid-BH2. Regulates the dimerization of homeodomain protein HNF-1-alpha and enhances its transcriptional activity. The protein is Pterin-4-alpha-carbinolamine dehydratase 2 (PCBD2) of Gallus gallus (Chicken).